Consider the following 575-residue polypeptide: Glycine--tRNA ligase (575 aa).

Positions 96 and 162 each coordinate substrate. ATP is bound by residues 194-196 (RNE), 204-209 (IRLREF), 327-328 (EC), and 450-453 (GIDR). 209–213 (FTQAE) is a binding site for substrate. Residue 446–450 (EPSYG) coordinates substrate.

Belongs to the class-II aminoacyl-tRNA synthetase family.

It localises to the cytoplasm. It carries out the reaction tRNA(Gly) + glycine + ATP = glycyl-tRNA(Gly) + AMP + diphosphate. Its function is as follows. Catalyzes the attachment of glycine to tRNA(Gly). The polypeptide is Glycine--tRNA ligase (Methanococcus maripaludis (strain C5 / ATCC BAA-1333)).